The following is a 319-amino-acid chain: Mitochondrial fission regulator 1-like (319 aa).

Residues 1-35 form a disordered region; it reads MASLGAGAEPESVLFGKDGTEACESPEGRRSGRRK.

The protein belongs to the MTFR1 family.

The protein resides in the mitochondrion outer membrane. Functionally, mitochondrial protein required for adaptation of miochondrial dynamics to metabolic changes. Regulates mitochondrial morphology at steady state and mediates AMPK-dependent stress-induced mitochondrial fragmentation via the control of OPA1 levels. The chain is Mitochondrial fission regulator 1-like (mtfr1l) from Xenopus tropicalis (Western clawed frog).